A 420-amino-acid chain; its full sequence is UDP-N-acetylglucosamine 1-carboxyvinyltransferase (420 aa).

22 to 23 (KN) lines the phosphoenolpyruvate pocket. Position 94 (R94) interacts with UDP-N-acetyl-alpha-D-glucosamine. C118 (proton donor) is an active-site residue. The residue at position 118 (C118) is a 2-(S-cysteinyl)pyruvic acid O-phosphothioketal. UDP-N-acetyl-alpha-D-glucosamine is bound by residues D307 and I329.

The protein belongs to the EPSP synthase family. MurA subfamily.

The protein resides in the cytoplasm. It carries out the reaction phosphoenolpyruvate + UDP-N-acetyl-alpha-D-glucosamine = UDP-N-acetyl-3-O-(1-carboxyvinyl)-alpha-D-glucosamine + phosphate. It functions in the pathway cell wall biogenesis; peptidoglycan biosynthesis. Its function is as follows. Cell wall formation. Adds enolpyruvyl to UDP-N-acetylglucosamine. The polypeptide is UDP-N-acetylglucosamine 1-carboxyvinyltransferase (Gluconacetobacter diazotrophicus (strain ATCC 49037 / DSM 5601 / CCUG 37298 / CIP 103539 / LMG 7603 / PAl5)).